The primary structure comprises 289 residues: MRLLVKAPAKINLSLDVLHKRPDGYHEVKMVMTTIDLADRIELIPQMDDTIQIISKNRFVPDDHRNLAYQAAKLLKDTFAIKQGIAISITKNIPVAAGLAGGSSDAAATLRGLNKLWNLGLTLDELAELGAKIGSDVSFCVYGGTAIATGRGEKITPIPAPPPCWVILAKPSIGVSTAEVYRNLKVDEIPHPDVDGMVEAIYRQDYAAICKLVGNVLEEVTLKKYPEVAHIKEQMKRFGADAVLMSGSGPTVFGLVQHDSRLQRIYNGLRGFCDQVFAVRILGERHSLD.

Residue K10 is part of the active site. ATP is bound at residue 94–104; it reads PVAAGLAGGSS. D136 is an active-site residue.

Belongs to the GHMP kinase family. IspE subfamily.

The enzyme catalyses 4-CDP-2-C-methyl-D-erythritol + ATP = 4-CDP-2-C-methyl-D-erythritol 2-phosphate + ADP + H(+). Its pathway is isoprenoid biosynthesis; isopentenyl diphosphate biosynthesis via DXP pathway; isopentenyl diphosphate from 1-deoxy-D-xylulose 5-phosphate: step 3/6. Functionally, catalyzes the phosphorylation of the position 2 hydroxy group of 4-diphosphocytidyl-2C-methyl-D-erythritol. The protein is 4-diphosphocytidyl-2-C-methyl-D-erythritol kinase of Geobacillus sp. (strain WCH70).